Consider the following 286-residue polypeptide: Bifunctional protein FolD (286 aa).

NADP(+) contacts are provided by residues 166 to 168 (GAS) and I232.

This sequence belongs to the tetrahydrofolate dehydrogenase/cyclohydrolase family. In terms of assembly, homodimer.

It carries out the reaction (6R)-5,10-methylene-5,6,7,8-tetrahydrofolate + NADP(+) = (6R)-5,10-methenyltetrahydrofolate + NADPH. It catalyses the reaction (6R)-5,10-methenyltetrahydrofolate + H2O = (6R)-10-formyltetrahydrofolate + H(+). It functions in the pathway one-carbon metabolism; tetrahydrofolate interconversion. Catalyzes the oxidation of 5,10-methylenetetrahydrofolate to 5,10-methenyltetrahydrofolate and then the hydrolysis of 5,10-methenyltetrahydrofolate to 10-formyltetrahydrofolate. In Vibrio parahaemolyticus serotype O3:K6 (strain RIMD 2210633), this protein is Bifunctional protein FolD.